A 309-amino-acid polypeptide reads, in one-letter code: Probable manganese-dependent inorganic pyrophosphatase (309 aa).

Positions 9, 13, 15, 75, 97, and 149 each coordinate Mn(2+).

This sequence belongs to the PPase class C family. The cofactor is Mn(2+).

The protein resides in the cytoplasm. The enzyme catalyses diphosphate + H2O = 2 phosphate + H(+). In Bacillus anthracis (strain CDC 684 / NRRL 3495), this protein is Probable manganese-dependent inorganic pyrophosphatase.